Reading from the N-terminus, the 66-residue chain is Large ribosomal subunit protein bL35 (66 aa).

It belongs to the bacterial ribosomal protein bL35 family.

The sequence is that of Large ribosomal subunit protein bL35 from Cereibacter sphaeroides (strain ATCC 17029 / ATH 2.4.9) (Rhodobacter sphaeroides).